The sequence spans 431 residues: F-box protein pof14 (431 aa).

Residues 172 to 186 enclose the F-box; atypical domain; sequence CPDEILQLIFSYCYD.

In terms of assembly, component of the E3 ubiquitin ligase Skp1-Cullin-1-F-box (SCF) complex. Interacts with skp1, cul1 and erg9.

It is found in the cytoplasm. The protein resides in the nucleus. It localises to the endoplasmic reticulum. Its function is as follows. Expression is induced during oxidative stress. Plays an essential, SCF-independent, role in the stress response to hydrogen peroxide for survival, by negatively regulating ergosterol synthesis via direct binding to the squalene synthase erg9. The chain is F-box protein pof14 (pof14) from Schizosaccharomyces pombe (strain 972 / ATCC 24843) (Fission yeast).